The chain runs to 320 residues: Cytochrome f (320 aa).

Residues 1-35 form the signal peptide; it reads MQTRKTLSWIKEEITRSISLSLMLSIITHASLSNA. Heme is bound by residues Tyr-36, Cys-56, Cys-59, and His-60. The chain crosses the membrane as a helical span at residues 286 to 306; sequence VQGLLFFLTSVLLAQIFLVLK.

Belongs to the cytochrome f family. The 4 large subunits of the cytochrome b6-f complex are cytochrome b6, subunit IV (17 kDa polypeptide, petD), cytochrome f and the Rieske protein, while the 4 small subunits are PetG, PetL, PetM and PetN. The complex functions as a dimer. Heme serves as cofactor.

The protein localises to the plastid. Its subcellular location is the chloroplast thylakoid membrane. Functionally, component of the cytochrome b6-f complex, which mediates electron transfer between photosystem II (PSII) and photosystem I (PSI), cyclic electron flow around PSI, and state transitions. The sequence is that of Cytochrome f from Pelargonium hortorum (Common geranium).